Reading from the N-terminus, the 265-residue chain is Small ribosomal subunit protein uS2 (265 aa).

It belongs to the universal ribosomal protein uS2 family.

In Gluconobacter oxydans (strain 621H) (Gluconobacter suboxydans), this protein is Small ribosomal subunit protein uS2.